The sequence spans 286 residues: Bifunctional protein FolD (286 aa).

NADP(+) contacts are provided by residues 165 to 167 (GRS) and serine 190.

It belongs to the tetrahydrofolate dehydrogenase/cyclohydrolase family. In terms of assembly, homodimer.

It catalyses the reaction (6R)-5,10-methylene-5,6,7,8-tetrahydrofolate + NADP(+) = (6R)-5,10-methenyltetrahydrofolate + NADPH. The catalysed reaction is (6R)-5,10-methenyltetrahydrofolate + H2O = (6R)-10-formyltetrahydrofolate + H(+). It functions in the pathway one-carbon metabolism; tetrahydrofolate interconversion. Catalyzes the oxidation of 5,10-methylenetetrahydrofolate to 5,10-methenyltetrahydrofolate and then the hydrolysis of 5,10-methenyltetrahydrofolate to 10-formyltetrahydrofolate. This Staphylococcus aureus (strain MRSA252) protein is Bifunctional protein FolD.